The sequence spans 410 residues: Multidrug resistance protein MdtM (410 aa).

Over 1-11 (MPRFFTRHAAT) the chain is Cytoplasmic. The helical transmembrane segment at 12–32 (LFFPMALILYDFAAYLSTDLI) threads the bilayer. Residues 33–48 (QPGIINVVRDFNADVS) lie on the Periplasmic side of the membrane. The chain crosses the membrane as a helical span at residues 49–69 (LAPAAVSLYLAGGMALQWLLG). At 70-78 (PLSDRIGRR) the chain is on the cytoplasmic side. Residues 79 to 99 (PVLITGALIFTLACAATMFTT) traverse the membrane as a helical segment. The Periplasmic segment spans residues 100 to 103 (SMTQ). A helical transmembrane segment spans residues 104–124 (FLIARAIQGTSICFIATVGYV). Over 125 to 140 (TVQEAFGQTKGIKLMA) the chain is Cytoplasmic. The chain crosses the membrane as a helical span at residues 141-161 (IITSIVLIAPIIGPLSGAALM). The Periplasmic portion of the chain corresponds to 162 to 167 (HFMHWK). The chain crosses the membrane as a helical span at residues 168–188 (VLFAIIAVMGFISFVGLLLAM). At 189–216 (PETVKRGAVPFSAKSVLRDFRNVFCNRL) the chain is on the cytoplasmic side. Residues 217–237 (FLFGAATISLSYIPMMSWVAV) traverse the membrane as a helical segment. At 238-251 (SPVILIDAGSLTTS) the chain is on the periplasmic side. A helical membrane pass occupies residues 252-272 (QFAWTQVPVFGAVIVANAIVA). Residues 273 to 282 (RFVKDPTEPR) are Cytoplasmic-facing. A helical membrane pass occupies residues 283 to 303 (FIWRAVPIQLVGLSLLIVGNL). Residues 304 to 307 (LSPH) are Periplasmic-facing. A helical membrane pass occupies residues 308–328 (VWLWSVLGTSLYAFGIGLIFP). The Cytoplasmic portion of the chain corresponds to 329 to 348 (TLFRFTLFSNKLPKGTVSAS). The chain crosses the membrane as a helical span at residues 349 to 369 (LNMVILMVMSVSVEIGRWLWF). The Periplasmic portion of the chain corresponds to 370–373 (NGGR). Residues 374–394 (LPFHLLAVVAGVIVVFTLAGL) form a helical membrane-spanning segment. Over 395–410 (LNRVRQHQAAELVEEQ) the chain is Cytoplasmic.

The protein belongs to the major facilitator superfamily. Monomer.

The protein localises to the cell inner membrane. The catalysed reaction is Na(+)(in) + 2 H(+)(out) = Na(+)(out) + 2 H(+)(in). The enzyme catalyses K(+)(in) + H(+)(out) = K(+)(out) + H(+)(in). With respect to regulation, efflux is inhibited by the ionophore carbonyl cyanide 3-chlorophenylhydrazone (CCCP). Its function is as follows. Proton-dependent efflux pump. Confers resistance to a broad spectrum of chemically unrelated substrates. Overexpression confers resistance to acriflavine, chloramphenicol, norfloxacin, ethidium bromide and tetraphenylphosphonium bromide (TPP). Can also export a broad range of quaternary ammonium compounds (QACs) and contribute to the intrinsic resistance of E.coli to these antimicrobial compounds. In addition to its role in multidrug resistance, MdtM likely plays a physiological role in alkaline pH homeostasis and in resistance to bile salts. May function in alkaline pH homeostasis when millimolar concentrations of sodium or potassium are present in the growth medium. When overexpressed, can confer a tolerance to alkaline pH values up to 9.75. Probably acts as a low-affinity antiporter that catalyzes the exchange of internal Na(+) and K(+) cations for extracellular protons to maintain a stable internal pH, acid relative to outside, during exposure to alkaline environments. Can also catalyze Rb(+)/H(+) and Li(+)/H(+) antiport, but not Ca(2+)/H(+) exchange. The exact stoichiometry of antiport is unknown. Finally, it could contribute to bile salt resistance by catalyzing the transport of bile salts out of the cell cytoplasm. Mediates a bile salt/H(+) exchange driven by the electrochemical gradient. Binds to cholate and deoxycholate with micromolar affinity and catalyzes both cholate/H(+) and deoxycholate/H(+) exchange reactions. The chain is Multidrug resistance protein MdtM from Escherichia coli (strain K12).